The following is a 325-amino-acid chain: Glutarate 2-hydroxylase (325 aa).

Positions 160, 162, and 292 each coordinate Fe cation.

Belongs to the glutarate hydroxylase family. In terms of assembly, homotetramer. Requires Fe(2+) as cofactor.

The enzyme catalyses glutarate + 2-oxoglutarate + O2 = (S)-2-hydroxyglutarate + succinate + CO2. It functions in the pathway amino-acid degradation. In terms of biological role, acts as an alpha-ketoglutarate-dependent dioxygenase catalyzing hydroxylation of glutarate (GA) to L-2-hydroxyglutarate (L2HG). Functions in a L-lysine degradation pathway that proceeds via cadaverine, glutarate and L-2-hydroxyglutarate. This chain is Glutarate 2-hydroxylase, found in Klebsiella pneumoniae (strain 342).